Consider the following 186-residue polypeptide: Ribosome-recycling factor (186 aa).

This sequence belongs to the RRF family.

The protein resides in the cytoplasm. Responsible for the release of ribosomes from messenger RNA at the termination of protein biosynthesis. May increase the efficiency of translation by recycling ribosomes from one round of translation to another. This is Ribosome-recycling factor from Bordetella avium (strain 197N).